A 427-amino-acid polypeptide reads, in one-letter code: Cyclin-L1-1 (427 aa).

The interval 258-427 (HRRTSDTNAS…SRDKDRHRRQ (170 aa)) is disordered. Over residues 263–276 (DTNASKESPATTVA) the composition is skewed to polar residues. 4 stretches are compositionally biased toward basic and acidic residues: residues 289–311 (QEKD…DDGK), 328–382 (KSEK…DRDR), 390–400 (DRSSGYSDKEK), and 407–421 (RDRG…SRDK).

The protein belongs to the cyclin family. Cyclin L subfamily.

The protein is Cyclin-L1-1 (CYCL1-1) of Oryza sativa subsp. japonica (Rice).